The following is a 227-amino-acid chain: Uracil-DNA glycosylase 2 (227 aa).

Catalysis depends on Asp67, which acts as the Proton acceptor.

It belongs to the uracil-DNA glycosylase (UDG) superfamily. UNG family.

It is found in the cytoplasm. The catalysed reaction is Hydrolyzes single-stranded DNA or mismatched double-stranded DNA and polynucleotides, releasing free uracil.. In terms of biological role, excises uracil residues from the DNA which can arise as a result of misincorporation of dUMP residues by DNA polymerase or due to deamination of cytosine. The chain is Uracil-DNA glycosylase 2 (ung2) from Streptomyces avermitilis (strain ATCC 31267 / DSM 46492 / JCM 5070 / NBRC 14893 / NCIMB 12804 / NRRL 8165 / MA-4680).